A 393-amino-acid polypeptide reads, in one-letter code: NAD(P)H-quinone oxidoreductase subunit H, chloroplastic (393 aa).

Belongs to the complex I 49 kDa subunit family. In terms of assembly, NDH is composed of at least 16 different subunits, 5 of which are encoded in the nucleus.

It localises to the plastid. Its subcellular location is the chloroplast thylakoid membrane. The catalysed reaction is a plastoquinone + NADH + (n+1) H(+)(in) = a plastoquinol + NAD(+) + n H(+)(out). It catalyses the reaction a plastoquinone + NADPH + (n+1) H(+)(in) = a plastoquinol + NADP(+) + n H(+)(out). In terms of biological role, NDH shuttles electrons from NAD(P)H:plastoquinone, via FMN and iron-sulfur (Fe-S) centers, to quinones in the photosynthetic chain and possibly in a chloroplast respiratory chain. The immediate electron acceptor for the enzyme in this species is believed to be plastoquinone. Couples the redox reaction to proton translocation, and thus conserves the redox energy in a proton gradient. In Panax ginseng (Korean ginseng), this protein is NAD(P)H-quinone oxidoreductase subunit H, chloroplastic.